A 276-amino-acid polypeptide reads, in one-letter code: NADPH-dependent 7-cyano-7-deazaguanine reductase (276 aa).

Position 83-85 (83-85 (IES)) interacts with substrate. An NADPH-binding site is contributed by 85 to 86 (SK). Cysteine 184 (thioimide intermediate) is an active-site residue. The active-site Proton donor is the aspartate 191. 223-224 (HE) lines the substrate pocket. 252–253 (RG) is a binding site for NADPH.

Belongs to the GTP cyclohydrolase I family. QueF type 2 subfamily. Homodimer.

The protein resides in the cytoplasm. It catalyses the reaction 7-aminomethyl-7-carbaguanine + 2 NADP(+) = 7-cyano-7-deazaguanine + 2 NADPH + 3 H(+). Its pathway is tRNA modification; tRNA-queuosine biosynthesis. Functionally, catalyzes the NADPH-dependent reduction of 7-cyano-7-deazaguanine (preQ0) to 7-aminomethyl-7-deazaguanine (preQ1). In Desulfotalea psychrophila (strain LSv54 / DSM 12343), this protein is NADPH-dependent 7-cyano-7-deazaguanine reductase.